The primary structure comprises 104 residues: Large ribosomal subunit protein bL21 (104 aa).

It belongs to the bacterial ribosomal protein bL21 family. In terms of assembly, part of the 50S ribosomal subunit. Contacts protein L20.

Its function is as follows. This protein binds to 23S rRNA in the presence of protein L20. The protein is Large ribosomal subunit protein bL21 of Helicobacter pylori (strain G27).